The following is a 1017-amino-acid chain: Genome polyprotein (1017 aa).

The 195-residue stretch at 1-195 (LSVTRKQCLE…IAWGPLNLVE (195 aa)) folds into the Peptidase C4 domain. Catalysis depends on for nuclear inclusion protein A activity residues D57 and C127. Residues 461–585 (WTYCHADGSQ…AVKDEDVWLY (125 aa)) enclose the RdRp catalytic domain. Residues 746–760 (DAGKESKKDASDKGN) are compositionally biased toward basic and acidic residues. The tract at residues 746-787 (DAGKESKKDASDKGNKPQNSQVGQGSKEPTKTGTVSKDVNVG) is disordered.

This sequence belongs to the potyviridae genome polyprotein family. Post-translationally, genome polyprotein of potyviruses undergoes post-translational proteolytic processing by the main proteinase NIa-pro resulting in the production of at least ten individual proteins. The P1 proteinase and the HC-pro cleave only their respective C-termini autocatalytically. 6K1 is essential for proper proteolytic separation of P3 from CI.

The protein resides in the virion. The enzyme catalyses Hydrolyzes glutaminyl bonds, and activity is further restricted by preferences for the amino acids in P6 - P1' that vary with the species of potyvirus, e.g. Glu-Xaa-Xaa-Tyr-Xaa-Gln-|-(Ser or Gly) for the enzyme from tobacco etch virus. The natural substrate is the viral polyprotein, but other proteins and oligopeptides containing the appropriate consensus sequence are also cleaved.. It catalyses the reaction RNA(n) + a ribonucleoside 5'-triphosphate = RNA(n+1) + diphosphate. Functionally, has RNA-binding and proteolytic activities. In terms of biological role, an RNA-dependent RNA polymerase that plays an essential role in the virus replication. Its function is as follows. Involved in aphid transmission, cell-to-cell and systemis movement, encapsidation of the viral RNA and in the regulation of viral RNA amplification. The chain is Genome polyprotein from Watermelon mosaic virus II (isolate USA).